The chain runs to 92 residues: Small ribosomal subunit protein bS16 (92 aa).

This sequence belongs to the bacterial ribosomal protein bS16 family.

The polypeptide is Small ribosomal subunit protein bS16 (Desulforudis audaxviator (strain MP104C)).